The sequence spans 293 residues: N(1)-aminopropylagmatine ureohydrolase (293 aa).

Mn(2+)-binding residues include H105, D128, H130, D132, D210, and D212.

This sequence belongs to the arginase family. Mn(2+) serves as cofactor.

It localises to the cytoplasm. The enzyme catalyses N(1)-(3-aminopropyl)agmatine + H2O = urea + spermidine. It functions in the pathway amine and polyamine biosynthesis; spermidine biosynthesis. Its function is as follows. Involved in the biosynthesis of polyamines which are thought to support the growth of thermophilic microorganisms under high-temperature conditions. It seems that long-chain and branched-chain of polyamines effectively stabilize DNA and RNA, respectively. Catalyzes the decarboxylation of N1-(3-aminopropyl)agmatine to yield spermidine and urea. It cannot use agmatine as substrate. In Thermus thermophilus (strain ATCC 27634 / DSM 579 / HB8), this protein is N(1)-aminopropylagmatine ureohydrolase.